A 47-amino-acid polypeptide reads, in one-letter code: Small, acid-soluble spore protein N (47 aa).

The segment covering 1-12 has biased composition (basic residues); it reads MSNPKGSRKHFV. Residues 1–47 form a disordered region; the sequence is MSNPKGSRKHFVPNHIGTQPRAAGGNKGKQMQDQSGQHAQVIQTKGE. The segment covering 29 to 47 has biased composition (polar residues); sequence KQMQDQSGQHAQVIQTKGE.

It belongs to the SspN family.

Its subcellular location is the spore core. The protein is Small, acid-soluble spore protein N of Geobacillus kaustophilus (strain HTA426).